A 207-amino-acid chain; its full sequence is Vascular endothelial growth factor B (207 aa).

The N-terminal stretch at 1 to 21 (MSPLLRRLLLVALLQLACTQA) is a signal peptide. 2 disulfide bridges follow: Cys-78–Cys-122 and Cys-82–Cys-124. A disordered region spans residues 140 to 182 (IPHHRPQPRSVLSWDSAPGASSPADIIHPTPAPGPSAHAAPSA).

It belongs to the PDGF/VEGF growth factor family. In terms of assembly, homodimer; disulfide-linked. Can also form heterodimer with VEGF.

It is found in the secreted. Its function is as follows. Growth factor for endothelial cells. VEGF-B167 binds heparin and neuropilin-1 whereas the binding to neuropilin-1 of VEGF-B186 is regulated by proteolysis. In Rattus norvegicus (Rat), this protein is Vascular endothelial growth factor B (Vegfb).